Consider the following 259-residue polypeptide: Deoxyribose-phosphate aldolase (259 aa).

The Proton donor/acceptor role is filled by aspartate 102. The active-site Schiff-base intermediate with acetaldehyde is the lysine 167. The active-site Proton donor/acceptor is the lysine 201.

The protein belongs to the DeoC/FbaB aldolase family. DeoC type 2 subfamily.

The protein resides in the cytoplasm. It carries out the reaction 2-deoxy-D-ribose 5-phosphate = D-glyceraldehyde 3-phosphate + acetaldehyde. The protein operates within carbohydrate degradation; 2-deoxy-D-ribose 1-phosphate degradation; D-glyceraldehyde 3-phosphate and acetaldehyde from 2-deoxy-alpha-D-ribose 1-phosphate: step 2/2. In terms of biological role, catalyzes a reversible aldol reaction between acetaldehyde and D-glyceraldehyde 3-phosphate to generate 2-deoxy-D-ribose 5-phosphate. In Photorhabdus laumondii subsp. laumondii (strain DSM 15139 / CIP 105565 / TT01) (Photorhabdus luminescens subsp. laumondii), this protein is Deoxyribose-phosphate aldolase.